A 296-amino-acid polypeptide reads, in one-letter code: Protoheme IX farnesyltransferase 2 (296 aa).

9 helical membrane-spanning segments follow: residues 7 to 27, 36 to 56, 83 to 103, 108 to 128, 134 to 154, 163 to 183, 207 to 227, 229 to 249, and 265 to 285; these read LLVA…GGYF, PMLL…GCVL, LKAA…LLWW, LTTA…SLWF, YGTL…YCAV, ASLL…IAIF, IHIV…CLGG, AGYG…AIAL, and FAFS…DFQV.

This sequence belongs to the UbiA prenyltransferase family. Protoheme IX farnesyltransferase subfamily.

The protein resides in the cell inner membrane. The catalysed reaction is heme b + (2E,6E)-farnesyl diphosphate + H2O = Fe(II)-heme o + diphosphate. The protein operates within porphyrin-containing compound metabolism; heme O biosynthesis; heme O from protoheme: step 1/1. Converts heme B (protoheme IX) to heme O by substitution of the vinyl group on carbon 2 of heme B porphyrin ring with a hydroxyethyl farnesyl side group. The sequence is that of Protoheme IX farnesyltransferase 2 from Pseudomonas paraeruginosa (strain DSM 24068 / PA7) (Pseudomonas aeruginosa (strain PA7)).